A 995-amino-acid polypeptide reads, in one-letter code: MMNFLRRLLGDSNEKELRRLQPIVEEINRLGPEFAALSDAELRAKTDEFRQRLADGETLDDILPEAFATVREAAHRTIGLRHYDVQLIGGIVLHQGKIAEMKTGEGKTLVATLPLYLNALEGKGVHLVTVNDYLAKVGAGWMGPIYHFLGLTVGFIAHDQSALYDPDFIDPDANPEDQRLVHWRPCTRREAYLADITYGTNNEFGFDYLRDNMAYEKSQLVQRELHYAIVDEVDNILIDEARTPLIISGPAQKSSDLYRQMAQLVRQLRRSSVTAKQVKEEGLEPDGDFFVDERTKSIYLSEKGIEKLERLLRIPPGESLFDPEHYEKTHYIENALKAQFIYQRDRDYMVTPNGEVVIIDEFTGRAMPGRRWSDGLHQAVEAKEGVAIKNENVTLATITFQNYFRMYKKLAGMTGTAYTEREEFAKIYNLEVVVIPTHKPMIREDLPDQIYATEEAKFNAVLREVQEMHEIGRPVLIGTTSVETSERISAMLKRAGIPHNVLNAKHHEREAAIIAQAGRKGAVTVATNMAGRGTDILLGGNPDGLLEEFLRKEGLTIETATPEQKRAAWEKARAQTEAEGEEVRRLGGLHVIGTERHEARRIDNQLRGRAGRQGDPGSSRFFLSLEDELLRRFGPVDRIKGLMERFVDSDVPLQAGLLDRTIEGAQTRVEGYNFDVRKHTVEFDDVMNKQRQIIYADRKAILDEADMRERVLDLMAEEIQRQIDEHLIDGFEEEDLTNLLRAYRRINSTLPASVTAETLKGKTKEEIEQYLLDHLETTYAERERAVTPELMRTIERRVMLGAIDRQWVDYLTAMDELRQNILLQAYAQRDPLVEFKRESFRMFDELKQNIARDIVYNIIPATFQYEAYLRQIAEEQARRLATAQTVSSDGNGEVVRKPQRRSTPQIGRNELCPCGSGKKFKHCHLGREHELASLLNAQPSAPPASKALKSTPATQTAVAEEAAKIQAAINSGKLPPTQTTPRGRQAPSVPRGKKR.

ATP-binding positions include Gln86, 104 to 108 (GEGKT), and Asp535. A disordered region spans residues 883 to 911 (AQTVSSDGNGEVVRKPQRRSTPQIGRNEL). Zn(2+) is bound by residues Cys912, Cys914, Cys923, and His924. Residues 939–995 (PSAPPASKALKSTPATQTAVAEEAAKIQAAINSGKLPPTQTTPRGRQAPSVPRGKKR) are disordered. Positions 957–969 (AVAEEAAKIQAAI) are enriched in low complexity.

Belongs to the SecA family. As to quaternary structure, monomer and homodimer. Part of the essential Sec protein translocation apparatus which comprises SecA, SecYEG and auxiliary proteins SecDF. Other proteins may also be involved. Zn(2+) is required as a cofactor.

Its subcellular location is the cell membrane. The protein resides in the cytoplasm. The catalysed reaction is ATP + H2O + cellular proteinSide 1 = ADP + phosphate + cellular proteinSide 2.. In terms of biological role, part of the Sec protein translocase complex. Interacts with the SecYEG preprotein conducting channel. Has a central role in coupling the hydrolysis of ATP to the transfer of proteins into and across the cell membrane, serving as an ATP-driven molecular motor driving the stepwise translocation of polypeptide chains across the membrane. This is Protein translocase subunit SecA from Chloroflexus aurantiacus (strain ATCC 29366 / DSM 635 / J-10-fl).